The following is a 236-amino-acid chain: Uridylate kinase (236 aa).

9-12 (KISG) provides a ligand contact to ATP. Glycine 51 is a binding site for UMP. Positions 52 and 56 each coordinate ATP. UMP-binding positions include aspartate 71 and 132–139 (TGNSHFTT). 2 residues coordinate ATP: tyrosine 166 and aspartate 169.

Belongs to the UMP kinase family. Homohexamer.

The protein localises to the cytoplasm. The enzyme catalyses UMP + ATP = UDP + ADP. The protein operates within pyrimidine metabolism; CTP biosynthesis via de novo pathway; UDP from UMP (UMPK route): step 1/1. With respect to regulation, inhibited by UTP. Functionally, catalyzes the reversible phosphorylation of UMP to UDP. This chain is Uridylate kinase, found in Mycoplasmoides gallisepticum (strain R(low / passage 15 / clone 2)) (Mycoplasma gallisepticum).